The sequence spans 266 residues: uncharacterized protein (266 aa).

This sequence belongs to the chlamydial CPn_0087/CT_309/TC_0583 family.

This is an uncharacterized protein from Chlamydia pneumoniae (Chlamydophila pneumoniae).